A 541-amino-acid polypeptide reads, in one-letter code: Sialate O-acetylesterase (541 aa).

The signal sequence occupies residues 1–23 (MVSPGPVFGIVLLIIARVSRSAG). N-linked (GlcNAc...) asparagine glycosylation is found at N107, N138, N188, N293, N356, N427, N448, and N462.

As to quaternary structure, disulfide-linked heterodimer of a small subunit and a large subunit. The two subunits are derived from a single precursor by proteolytic cleavage. Post-translationally, the lysosomal isoform is glycosylated. Highly expressed in liver, testis, and kidney, whereas skeletal muscle, adipose tissue, and heart have lower levels. As to expression, highest expression in brain and ovary and lower levels in liver and thymus.

The protein resides in the lysosome. It localises to the cytoplasm. The catalysed reaction is N-acetyl-9-O-acetylneuraminate + H2O = N-acetylneuraminate + acetate + H(+). It carries out the reaction an Ac-O-9-sialoglycoconjugate + H2O = a sialoglycoconjugate + acetate + H(+). With respect to regulation, inhibited by diisopropyl fluorophosphate and diethyl-P-nitrophenyl phosphate. Functionally, catalyzes the removal of O-acetyl ester groups from position 9 of the free diacetylated sialate N-acetyl-9-O-acetylneuraminate (Neu5,9Ac2) in the cytosol and of the diacetylated sialate residues of sialylglycoconjugates in the lysosomes. Together with the sialate-O-acetyltransferase they regulate the balance of acetylated sialoglycoconjugates, key players in various processes such as cell-cell interactions, host-pathogen recognition, and tumor antigenicity. This is Sialate O-acetylesterase (Siae) from Mus musculus (Mouse).